A 962-amino-acid polypeptide reads, in one-letter code: Splicing regulator ARVCF (962 aa).

Residues 11-46 (SILASVKEQEARFERLTRALEQERRHVALQLERAQQ) adopt a coiled-coil conformation. Residues 95-123 (VTVEEDPGTPTSHVSIVTSEDGTTRRTET) are disordered. Phosphothreonine occurs at positions 103 and 105. The segment covering 103–115 (TPTSHVSIVTSED) has biased composition (polar residues). Position 171 is an omega-N-methylarginine (Arg171). Disordered regions lie at residues 233–255 (GRRE…LPEH), 268–291 (RSLA…TRRR), and 322–357 (AATA…EPRW). A Phosphoserine modification is found at Ser269. Residues 272–282 (ADDEGGPDLEP) are compositionally biased toward acidic residues. Phosphoserine occurs at positions 334, 337, 345, and 347. 6 ARM repeats span residues 350-389 (STRK…HLCF), 392-431 (EGIK…NLSY), 435-469 (TDNK…VTGT), 470-510 (LWNL…NEDS), 528-567 (LRNV…DTDN), and 577-623 (MRNL…GKKA). The interval 593 to 618 (RYQEAEPGIPGSTTSQRRRKDDASCF) is disordered. Ser607 carries the phosphoserine modification. The Nuclear localization signal motif lies at 608 to 624 (QRRRKDDASCFGGKKAK). Thr643 carries the post-translational modification Phosphothreonine. ARM repeat units follow at residues 647–687 (PKRT…AAGA), 700–739 (TYIR…NLSL), 740–782 (DQRN…AVLN), and 783–827 (TIHE…SHVL). Residues 777–962 (VVAVLNTIHE…TKPQPVDSWV (186 aa)) form a required for interaction with RNA-binding proteins DDX5, HNRNPH2 and SRSF1 and with mRNAs region. The tract at residues 844 to 962 (GWTKSRFQSA…TKPQPVDSWV (119 aa)) is disordered. Phosphoserine is present on residues Ser864 and Ser871. Thr872 carries the phosphothreonine modification. Composition is skewed to basic and acidic residues over residues 878–887 (KSLDGEKSNT) and 920–932 (TSEK…DPGR).

The protein belongs to the beta-catenin family. In terms of assembly, component of a ribonucleoprotein complex containing mRNAs and RNA-binding proteins including DDX5, HNRNPH2 and SRSF1 as well as ARVCF. Interacts (via the extreme C-terminus) with FRMPD2 (via the PDZ 2 domain). Interacts with CCDC85B.

The protein localises to the cell junction. Its subcellular location is the adherens junction. The protein resides in the nucleus. It localises to the cytoplasm. In terms of biological role, contributes to the regulation of alternative splicing of pre-mRNAs. This chain is Splicing regulator ARVCF (Arvcf), found in Mus musculus (Mouse).